The sequence spans 227 residues: tRNA (guanine-N(1)-)-methyltransferase (227 aa).

S-adenosyl-L-methionine-binding positions include G107 and 127–132 (LGDFIL).

This sequence belongs to the RNA methyltransferase TrmD family. Homodimer.

The protein resides in the cytoplasm. It catalyses the reaction guanosine(37) in tRNA + S-adenosyl-L-methionine = N(1)-methylguanosine(37) in tRNA + S-adenosyl-L-homocysteine + H(+). In terms of biological role, specifically methylates guanosine-37 in various tRNAs. The chain is tRNA (guanine-N(1)-)-methyltransferase from Mesomycoplasma hyopneumoniae (strain 7448) (Mycoplasma hyopneumoniae).